The chain runs to 373 residues: Queuine tRNA-ribosyltransferase (373 aa).

Asp94 acts as the Proton acceptor in catalysis. Substrate contacts are provided by residues 94 to 98 (DSGGF), Asp148, Gln190, and Gly217. The segment at 248–254 (GVGSPDC) is RNA binding. Asp267 serves as the catalytic Nucleophile. An RNA binding; important for wobble base 34 recognition region spans residues 272 to 276 (TRIAR). The Zn(2+) site is built by Cys305, Cys307, Cys310, and His336.

Belongs to the queuine tRNA-ribosyltransferase family. In terms of assembly, homodimer. Within each dimer, one monomer is responsible for RNA recognition and catalysis, while the other monomer binds to the replacement base PreQ1. Zn(2+) serves as cofactor.

It carries out the reaction 7-aminomethyl-7-carbaguanine + guanosine(34) in tRNA = 7-aminomethyl-7-carbaguanosine(34) in tRNA + guanine. It participates in tRNA modification; tRNA-queuosine biosynthesis. Functionally, catalyzes the base-exchange of a guanine (G) residue with the queuine precursor 7-aminomethyl-7-deazaguanine (PreQ1) at position 34 (anticodon wobble position) in tRNAs with GU(N) anticodons (tRNA-Asp, -Asn, -His and -Tyr). Catalysis occurs through a double-displacement mechanism. The nucleophile active site attacks the C1' of nucleotide 34 to detach the guanine base from the RNA, forming a covalent enzyme-RNA intermediate. The proton acceptor active site deprotonates the incoming PreQ1, allowing a nucleophilic attack on the C1' of the ribose to form the product. After dissociation, two additional enzymatic reactions on the tRNA convert PreQ1 to queuine (Q), resulting in the hypermodified nucleoside queuosine (7-(((4,5-cis-dihydroxy-2-cyclopenten-1-yl)amino)methyl)-7-deazaguanosine). The chain is Queuine tRNA-ribosyltransferase from Moorella thermoacetica (strain ATCC 39073 / JCM 9320).